The following is a 765-amino-acid chain: Myotubularin-related protein 10-A (765 aa).

The region spanning 209–650 is the Myotubularin phosphatase domain; it reads FETYSDWDRE…THIKLWKLCY (442 aa).

This sequence belongs to the protein-tyrosine phosphatase family. Non-receptor class myotubularin subfamily.

The chain is Myotubularin-related protein 10-A (mtmr10-a) from Xenopus laevis (African clawed frog).